A 154-amino-acid polypeptide reads, in one-letter code: NADPH-dependent 7-cyano-7-deazaguanine reductase (154 aa).

The span at 1–23 shows a compositional bias: polar residues; the sequence is MPNTDVSSLSMLGQQTETAQSPE. The segment at 1-26 is disordered; the sequence is MPNTDVSSLSMLGQQTETAQSPEQAV. The Thioimide intermediate role is filled by Cys52. The Proton donor role is filled by Asp59. Substrate-binding positions include 74-76 and 93-94; these read VES and HE.

It belongs to the GTP cyclohydrolase I family. QueF type 1 subfamily.

It localises to the cytoplasm. The catalysed reaction is 7-aminomethyl-7-carbaguanine + 2 NADP(+) = 7-cyano-7-deazaguanine + 2 NADPH + 3 H(+). The protein operates within tRNA modification; tRNA-queuosine biosynthesis. Catalyzes the NADPH-dependent reduction of 7-cyano-7-deazaguanine (preQ0) to 7-aminomethyl-7-deazaguanine (preQ1). The protein is NADPH-dependent 7-cyano-7-deazaguanine reductase of Rhizobium leguminosarum bv. trifolii (strain WSM2304).